The following is a 473-amino-acid chain: Anthocyanidin 5,3-O-glucosyltransferase (473 aa).

Belongs to the UDP-glycosyltransferase family.

It participates in pigment biosynthesis; anthocyanin biosynthesis. Its function is as follows. Sequentially catalyzes two glycosylation steps at the 5-OH and 3-OH positions of anthocyanidin. Unglycosylated anthocyanidin or anthocyanidin 5-O-glucoside, but not anthocyanidin 3-O-glucoside, can be used as glucosyl acceptor. The polypeptide is Anthocyanidin 5,3-O-glucosyltransferase (RhGT1) (Rosa hybrid cultivar).